The chain runs to 251 residues: Putative F-box protein PP2-B12 (251 aa).

The F-box domain maps to 1 to 46; sequence MNFLDLPEECIATMISFTSPFDACRISAVSKLLRSAADSNTTWERF.

The chain is Putative F-box protein PP2-B12 (PP2B12) from Arabidopsis thaliana (Mouse-ear cress).